The primary structure comprises 122 residues: Large ribosomal subunit protein uL14 (122 aa).

This sequence belongs to the universal ribosomal protein uL14 family. As to quaternary structure, part of the 50S ribosomal subunit. Forms a cluster with proteins L3 and L19. In the 70S ribosome, L14 and L19 interact and together make contacts with the 16S rRNA in bridges B5 and B8.

Its function is as follows. Binds to 23S rRNA. Forms part of two intersubunit bridges in the 70S ribosome. In Cupriavidus taiwanensis (strain DSM 17343 / BCRC 17206 / CCUG 44338 / CIP 107171 / LMG 19424 / R1) (Ralstonia taiwanensis (strain LMG 19424)), this protein is Large ribosomal subunit protein uL14.